A 377-amino-acid chain; its full sequence is Stimulator of interferon genes protein 7 (377 aa).

The next 4 helical transmembrane spans lie at 30–50 (TAAI…FLAV), 57–77 (THFL…GELL), 106–126 (FTFD…LILC), and 141–161 (FAIL…LVGL).

Belongs to the STING family.

The protein localises to the membrane. Its function is as follows. Facilitator of innate immune signaling that acts as a sensor of second messenger signals produced by cyclic GMP-AMP synthase-like receptors (cGLRs) and promotes the production of type I interferon. Innate immune response is triggered in response to nucleotides from viruses and bacteria delivered to the cytoplasm. Acts by binding cyclic dinucleotides: recognizes and binds a large variety of 2'-3'- and 3'-3' linked cyclic dinucleotides (2'-3'-cGAMP, 3'-3'-cGAMP, 2',3'-cUAMP, 3',3'-cUAMP and/or 3',3'-c-di-GMP) second messengers produced by cGLRs in response to nucleotides in the cytosol, such as double-stranded RNA (dsRNA). Upon binding to cyclic dinucleotides, oligomerizes and promotes the recruitment and subsequent activation of the transcription factor IRF3 to induce expression of type I interferon. This Stylophora pistillata (Smooth cauliflower coral) protein is Stimulator of interferon genes protein 7.